Here is a 276-residue protein sequence, read N- to C-terminus: Orotidine 5'-phosphate decarboxylase (276 aa).

Lys-95 serves as the catalytic Proton donor.

Belongs to the OMP decarboxylase family. Type 2 subfamily.

It carries out the reaction orotidine 5'-phosphate + H(+) = UMP + CO2. Its pathway is pyrimidine metabolism; UMP biosynthesis via de novo pathway; UMP from orotate: step 2/2. The sequence is that of Orotidine 5'-phosphate decarboxylase (pyrF) from Mycolicibacterium smegmatis (strain ATCC 700084 / mc(2)155) (Mycobacterium smegmatis).